The primary structure comprises 331 residues: MARLYYDADANLDLLSNKTVAIVGYGSQGHAHALNLRDSGVKVVVGLYPGSKSAESARLEGLTVTSVAEAAEVADLIMILLPDEVQKTVYQQEILPHLKPGKVIAFAHGFNIHFAQVVPPADVDVIMVAPKGPGHLVRRTYTQGEGVPCLFAVYQDASGQARDRAMAYAKGIGGTRAGILETTFREETETDLFGEQVVLCGGLTALIKSGFETLVAAGYQPELAYFECLHEVKLIVDLIVEGGLAKMRDSISNTAEYGDYTRGPRIITDETRREMEKILYEIQTGQFAREFVLENMSGKAGFTAMRRREAEHPIEEVGKDLRAMFSWLSKR.

In terms of domain architecture, KARI N-terminal Rossmann spans 2–182 (ARLYYDADAN…GGTRAGILET (181 aa)). NADP(+)-binding positions include 25-28 (YGSQ), Ser-51, Ser-53, and 83-86 (DEVQ). His-108 is a catalytic residue. An NADP(+)-binding site is contributed by Gly-134. The KARI C-terminal knotted domain occupies 183–328 (TFREETETDL…KDLRAMFSWL (146 aa)). Mg(2+) contacts are provided by Asp-191, Glu-195, Glu-227, and Glu-231. Ser-252 lines the substrate pocket.

Belongs to the ketol-acid reductoisomerase family. The cofactor is Mg(2+).

The enzyme catalyses (2R)-2,3-dihydroxy-3-methylbutanoate + NADP(+) = (2S)-2-acetolactate + NADPH + H(+). It carries out the reaction (2R,3R)-2,3-dihydroxy-3-methylpentanoate + NADP(+) = (S)-2-ethyl-2-hydroxy-3-oxobutanoate + NADPH + H(+). Its pathway is amino-acid biosynthesis; L-isoleucine biosynthesis; L-isoleucine from 2-oxobutanoate: step 2/4. It participates in amino-acid biosynthesis; L-valine biosynthesis; L-valine from pyruvate: step 2/4. In terms of biological role, involved in the biosynthesis of branched-chain amino acids (BCAA). Catalyzes an alkyl-migration followed by a ketol-acid reduction of (S)-2-acetolactate (S2AL) to yield (R)-2,3-dihydroxy-isovalerate. In the isomerase reaction, S2AL is rearranged via a Mg-dependent methyl migration to produce 3-hydroxy-3-methyl-2-ketobutyrate (HMKB). In the reductase reaction, this 2-ketoacid undergoes a metal-dependent reduction by NADPH to yield (R)-2,3-dihydroxy-isovalerate. This Cyanothece sp. (strain PCC 7425 / ATCC 29141) protein is Ketol-acid reductoisomerase (NADP(+)).